Reading from the N-terminus, the 517-residue chain is Pentatricopeptide repeat-containing protein At1g13040, mitochondrial (517 aa).

A mitochondrion-targeting transit peptide spans 1 to 57; sequence MHQTLGAVRLAYRSRIANLVKSGMIDNAVQVFDEMRHSSYRVFSFDYNRFIGVLVRE. PPR repeat units follow at residues 8-42, 43-77, 78-112, 113-147, 148-182, 183-218, 219-253, 254-288, 289-320, 324-358, 359-393, 394-428, 429-463, and 464-498; these read VRLA…SYRV, FSFD…GFSL, IPFT…GFIP, DIWA…GREP, DVVS…GVSP, DNKA…RVKL, STVV…GCEP, DLVT…GIQL, DAYS…MEPR, DVVS…GMVM, NVVT…GLSP, DRIF…EITP, DAIS…ECCP, and DELT…GFTL.

It belongs to the PPR family. P subfamily.

Its subcellular location is the mitochondrion. This chain is Pentatricopeptide repeat-containing protein At1g13040, mitochondrial, found in Arabidopsis thaliana (Mouse-ear cress).